The primary structure comprises 204 residues: Intraflagellar transport protein 27 (204 aa).

Residues 23–30 (GEATVGKS), 75–79 (DTAGS), and 136–139 (NKTD) each bind GTP.

This sequence belongs to the small GTPase superfamily. Rab family. Component of the IFT complex B, the core composed of IFT25, IFT27, IFT46, IFT52, IFT74, IFT81 and IFT88 as well as associated subunits IFT20, IFT57, IFT80 and IFT172. Interacts with IFT25; the interaction is direct.

It is found in the cell projection. It localises to the cilium. Its subcellular location is the flagellum. The protein resides in the cytoplasm. The protein localises to the cytoskeleton. It is found in the flagellum basal body. Functionally, small GTPase-like component of the intraflagellar transport (IFT) complex B. Forms a subcomplex within the IFT complex B with IFT25. Has very low GTPase activity either because it lacks the conserved catalytic Gln in position 79 or because it requires some GTPase-activating protein (GAP) for GTP turnover. This chain is Intraflagellar transport protein 27 (IFT27), found in Chlamydomonas reinhardtii (Chlamydomonas smithii).